Here is a 234-residue protein sequence, read N- to C-terminus: Glucosamine-6-phosphate deaminase (234 aa).

The active-site Proton acceptor; for enolization step is Asp63. The active-site For ring-opening step is the Asn129. The active-site Proton acceptor; for ring-opening step is the His131. The active-site For ring-opening step is the Glu136.

This sequence belongs to the glucosamine/galactosamine-6-phosphate isomerase family. NagB subfamily.

The catalysed reaction is alpha-D-glucosamine 6-phosphate + H2O = beta-D-fructose 6-phosphate + NH4(+). It participates in amino-sugar metabolism; N-acetylneuraminate degradation; D-fructose 6-phosphate from N-acetylneuraminate: step 5/5. Its function is as follows. Catalyzes the reversible isomerization-deamination of glucosamine 6-phosphate (GlcN6P) to form fructose 6-phosphate (Fru6P) and ammonium ion. The chain is Glucosamine-6-phosphate deaminase from Listeria monocytogenes serovar 1/2a (strain ATCC BAA-679 / EGD-e).